An 84-amino-acid chain; its full sequence is MYYRRQGEPQEMYGNGNNSVSSSAVNTYQPYYKEDFNILDPALSDSQRYIIYAIVAAILLLLFWLLYKKYGHKIGRKGSVSMFY.

Residues 1-21 (MYYRRQGEPQEMYGNGNNSVS) form a disordered region. The chain crosses the membrane as a helical span at residues 49–69 (YIIYAIVAAILLLLFWLLYKK).

The protein resides in the membrane. This is an uncharacterized protein from Invertebrate iridescent virus 6 (IIV-6).